Reading from the N-terminus, the 314-residue chain is Ribosomal RNA small subunit methyltransferase H (314 aa).

S-adenosyl-L-methionine is bound by residues 36–38 (GGH), D56, F80, D102, and Q109.

Belongs to the methyltransferase superfamily. RsmH family.

It is found in the cytoplasm. The catalysed reaction is cytidine(1402) in 16S rRNA + S-adenosyl-L-methionine = N(4)-methylcytidine(1402) in 16S rRNA + S-adenosyl-L-homocysteine + H(+). In terms of biological role, specifically methylates the N4 position of cytidine in position 1402 (C1402) of 16S rRNA. This is Ribosomal RNA small subunit methyltransferase H from Citrobacter koseri (strain ATCC BAA-895 / CDC 4225-83 / SGSC4696).